Here is a 306-residue protein sequence, read N- to C-terminus: Ribonuclease Z (306 aa).

Positions 63, 65, 67, 68, 141, 211, and 269 each coordinate Zn(2+). The active-site Proton acceptor is aspartate 67.

The protein belongs to the RNase Z family. Homodimer. Requires Zn(2+) as cofactor.

It catalyses the reaction Endonucleolytic cleavage of RNA, removing extra 3' nucleotides from tRNA precursor, generating 3' termini of tRNAs. A 3'-hydroxy group is left at the tRNA terminus and a 5'-phosphoryl group is left at the trailer molecule.. Functionally, zinc phosphodiesterase, which displays some tRNA 3'-processing endonuclease activity. Probably involved in tRNA maturation, by removing a 3'-trailer from precursor tRNA. This is Ribonuclease Z from Staphylococcus haemolyticus (strain JCSC1435).